Consider the following 416-residue polypeptide: Histidine--tRNA ligase (416 aa).

It belongs to the class-II aminoacyl-tRNA synthetase family.

It localises to the cytoplasm. The enzyme catalyses tRNA(His) + L-histidine + ATP = L-histidyl-tRNA(His) + AMP + diphosphate + H(+). The protein is Histidine--tRNA ligase of Methanococcus maripaludis (strain DSM 14266 / JCM 13030 / NBRC 101832 / S2 / LL).